We begin with the raw amino-acid sequence, 323 residues long: Acetyl esterase (323 aa).

The Involved in the stabilization of the negatively charged intermediate by the formation of the oxyanion hole motif lies at histidine 91–glycine 93. Active-site residues include serine 165, aspartate 262, and histidine 292.

Belongs to the 'GDXG' lipolytic enzyme family. Homodimer. Interacts with MalT and MelA.

It is found in the cytoplasm. Functionally, displays esterase activity towards short chain fatty esters (acyl chain length of up to 8 carbons). Able to hydrolyze triacetylglycerol (triacetin) and tributyrylglycerol (tributyrin), but not trioleylglycerol (triolein) or cholesterol oleate. Negatively regulates MalT activity by antagonizing maltotriose binding. Inhibits MelA galactosidase activity. The polypeptide is Acetyl esterase (Salmonella schwarzengrund (strain CVM19633)).